A 600-amino-acid chain; its full sequence is Elongation factor 4 (600 aa).

Residues 4–186 (SKIRNFSIIA…AIVNKIPAPY (183 aa)) form the tr-type G domain. Residues 16 to 21 (DHGKST) and 133 to 136 (NKVD) contribute to the GTP site.

This sequence belongs to the TRAFAC class translation factor GTPase superfamily. Classic translation factor GTPase family. LepA subfamily.

It localises to the cell membrane. The catalysed reaction is GTP + H2O = GDP + phosphate + H(+). Functionally, required for accurate and efficient protein synthesis under certain stress conditions. May act as a fidelity factor of the translation reaction, by catalyzing a one-codon backward translocation of tRNAs on improperly translocated ribosomes. Back-translocation proceeds from a post-translocation (POST) complex to a pre-translocation (PRE) complex, thus giving elongation factor G a second chance to translocate the tRNAs correctly. Binds to ribosomes in a GTP-dependent manner. The protein is Elongation factor 4 of Mesoplasma florum (strain ATCC 33453 / NBRC 100688 / NCTC 11704 / L1) (Acholeplasma florum).